Reading from the N-terminus, the 336-residue chain is Holliday junction branch migration complex subunit RuvB (336 aa).

Residues 1–181 (MDRIVEIEKF…FGMQFRLEFY (181 aa)) are large ATPase domain (RuvB-L). ATP contacts are provided by residues leucine 20, arginine 21, glycine 62, lysine 65, threonine 66, threonine 67, 128 to 130 (EDF), arginine 171, tyrosine 181, and arginine 218. Mg(2+) is bound at residue threonine 66. The interval 182 to 252 (KNEELAIILE…RAKEALDSLG (71 aa)) is small ATPAse domain (RuvB-S). The head domain (RuvB-H) stretch occupies residues 255–336 (ELGFDAMDLR…KYNKGLFDEK (82 aa)). DNA is bound by residues arginine 309 and arginine 314.

This sequence belongs to the RuvB family. As to quaternary structure, homohexamer. Forms an RuvA(8)-RuvB(12)-Holliday junction (HJ) complex. HJ DNA is sandwiched between 2 RuvA tetramers; dsDNA enters through RuvA and exits via RuvB. An RuvB hexamer assembles on each DNA strand where it exits the tetramer. Each RuvB hexamer is contacted by two RuvA subunits (via domain III) on 2 adjacent RuvB subunits; this complex drives branch migration. In the full resolvosome a probable DNA-RuvA(4)-RuvB(12)-RuvC(2) complex forms which resolves the HJ.

It is found in the cytoplasm. The enzyme catalyses ATP + H2O = ADP + phosphate + H(+). Its function is as follows. The RuvA-RuvB-RuvC complex processes Holliday junction (HJ) DNA during genetic recombination and DNA repair, while the RuvA-RuvB complex plays an important role in the rescue of blocked DNA replication forks via replication fork reversal (RFR). RuvA specifically binds to HJ cruciform DNA, conferring on it an open structure. The RuvB hexamer acts as an ATP-dependent pump, pulling dsDNA into and through the RuvAB complex. RuvB forms 2 homohexamers on either side of HJ DNA bound by 1 or 2 RuvA tetramers; 4 subunits per hexamer contact DNA at a time. Coordinated motions by a converter formed by DNA-disengaged RuvB subunits stimulates ATP hydrolysis and nucleotide exchange. Immobilization of the converter enables RuvB to convert the ATP-contained energy into a lever motion, pulling 2 nucleotides of DNA out of the RuvA tetramer per ATP hydrolyzed, thus driving DNA branch migration. The RuvB motors rotate together with the DNA substrate, which together with the progressing nucleotide cycle form the mechanistic basis for DNA recombination by continuous HJ branch migration. Branch migration allows RuvC to scan DNA until it finds its consensus sequence, where it cleaves and resolves cruciform DNA. This chain is Holliday junction branch migration complex subunit RuvB, found in Campylobacter lari (strain RM2100 / D67 / ATCC BAA-1060).